A 50-amino-acid polypeptide reads, in one-letter code: Kappa-actitoxin-Bcs4a (50 aa).

It belongs to the sea anemone type 5 potassium channel toxin family. Contains 4 disulfide bonds.

The protein localises to the secreted. It localises to the nematocyst. Its function is as follows. Inhibits voltage-gated potassium channels (Kv1/KCNA). Is potent on Drosophila Shaker IR channels (IC(50)=94.25 nM), and rKv1.2/KCNA2 (IC(50)=172.59 nM), and moderately active on hKv1.3/KCNA3 (IC(50)=1006.48 nM), rKv1.6/KCNA6 (IC(50)=2245.93 nM), and Kv1.1/KCNA1 (IC(50) around 3 uM). In vivo, induces a rapid increase in swimming speed on zebrafish larvae, as well as death which occurs between 2 and 18 hours later. Also paralyzes swimming crabs (C.danae) when injected at the junction between the body and the walking leg. In Bunodosoma caissarum (Sea anemone), this protein is Kappa-actitoxin-Bcs4a.